The chain runs to 192 residues: MIEEIKSQIHSHQKVMESIGQELSPKIAAVVELLADALGNGKKLLVMGNGGSAADAQHLVAELVGRFKMERRGLPAIALTTDTSILTAIGNDYGFENIFSRQIEALARPGDVVVGISTSGTSKNVYKALLVADELGCRTIGLLGRDGGTIAEIVDVPITVPCDDTPRVQEGHITIIHILCDLLEKRLFGERR.

One can recognise an SIS domain in the interval L34 to R192. N49–G51 is a binding site for substrate. H58 and E62 together coordinate Zn(2+). Residues E62, N91–D92, S117–S119, S122, and Q169 each bind substrate. Zn(2+)-binding residues include Q169 and H177.

This sequence belongs to the SIS family. GmhA subfamily. As to quaternary structure, homotetramer. Zn(2+) serves as cofactor.

It localises to the cytoplasm. It carries out the reaction 2 D-sedoheptulose 7-phosphate = D-glycero-alpha-D-manno-heptose 7-phosphate + D-glycero-beta-D-manno-heptose 7-phosphate. It functions in the pathway carbohydrate biosynthesis; D-glycero-D-manno-heptose 7-phosphate biosynthesis; D-glycero-alpha-D-manno-heptose 7-phosphate and D-glycero-beta-D-manno-heptose 7-phosphate from sedoheptulose 7-phosphate: step 1/1. Its function is as follows. Catalyzes the isomerization of sedoheptulose 7-phosphate in D-glycero-D-manno-heptose 7-phosphate. This Geotalea daltonii (strain DSM 22248 / JCM 15807 / FRC-32) (Geobacter daltonii) protein is Phosphoheptose isomerase.